The chain runs to 777 residues: DNA ligase (777 aa).

NAD(+) contacts are provided by residues 35 to 39, 84 to 85, and E116; these read DAEYD and SL. The active-site N6-AMP-lysine intermediate is the K118. NAD(+) contacts are provided by R139, E176, K293, and K317. Residues C411, C414, C429, and C435 each contribute to the Zn(2+) site. Positions 691–777 constitute a BRCT domain; that stretch reads MESQPLEGQT…NQHGIDPGAL (87 aa).

Belongs to the NAD-dependent DNA ligase family. LigA subfamily. It depends on Mg(2+) as a cofactor. Mn(2+) is required as a cofactor.

The catalysed reaction is NAD(+) + (deoxyribonucleotide)n-3'-hydroxyl + 5'-phospho-(deoxyribonucleotide)m = (deoxyribonucleotide)n+m + AMP + beta-nicotinamide D-nucleotide.. Functionally, DNA ligase that catalyzes the formation of phosphodiester linkages between 5'-phosphoryl and 3'-hydroxyl groups in double-stranded DNA using NAD as a coenzyme and as the energy source for the reaction. It is essential for DNA replication and repair of damaged DNA. The sequence is that of DNA ligase from Alcanivorax borkumensis (strain ATCC 700651 / DSM 11573 / NCIMB 13689 / SK2).